Here is a 467-residue protein sequence, read N- to C-terminus: Dimethylamine methyltransferase MtbB2 (467 aa).

Position 356 (O356) is a non-standard amino acid, pyrrolysine.

Belongs to the dimethylamine methyltransferase family.

It carries out the reaction Co(I)-[dimethylamine-specific corrinoid protein] + dimethylamine + H(+) = methyl-Co(III)-[dimethylamine-specific corrinoid protein] + methylamine. The protein operates within one-carbon metabolism; methanogenesis from dimethylamine. In terms of biological role, catalyzes the transfer of a methyl group from dimethylamine to the corrinoid cofactor of MtbC. In Methanosarcina barkeri (strain Fusaro / DSM 804), this protein is Dimethylamine methyltransferase MtbB2 (mtbB2).